A 243-amino-acid chain; its full sequence is Small ribosomal subunit protein uS5 (243 aa).

2 stretches are compositionally biased toward basic and acidic residues: residues 1-21 (MPID…EGQK) and 34-46 (LEEK…DHKG). The interval 1 to 85 (MPIDKKQEKN…NFKKNANKKP (85 aa)) is disordered. Residues 89-152 (FEEKIVNIAR…KDAQNNLIRV (64 aa)) enclose the S5 DRBM domain.

The protein belongs to the universal ribosomal protein uS5 family. In terms of assembly, part of the 30S ribosomal subunit. Contacts proteins S4 and S8.

With S4 and S12 plays an important role in translational accuracy. In terms of biological role, located at the back of the 30S subunit body where it stabilizes the conformation of the head with respect to the body. The polypeptide is Small ribosomal subunit protein uS5 (Mycoplasma mobile (strain ATCC 43663 / 163K / NCTC 11711) (Mesomycoplasma mobile)).